A 335-amino-acid chain; its full sequence is tRNA N6-adenosine threonylcarbamoyltransferase (335 aa).

Residues His-109, His-113, and Tyr-130 each contribute to the a divalent metal cation site. Substrate contacts are provided by residues 130–134, Asp-162, Gly-177, Glu-181, and Asn-266; that span reads YVSGG. Asp-294 lines the a divalent metal cation pocket.

It belongs to the KAE1 / TsaD family. In terms of assembly, component of the EKC/KEOPS complex composed of at least GON7, TP53RK, TPRKB, OSGEP and LAGE3; the whole complex dimerizes. A divalent metal cation serves as cofactor.

The protein localises to the cytoplasm. It localises to the nucleus. It carries out the reaction L-threonylcarbamoyladenylate + adenosine(37) in tRNA = N(6)-L-threonylcarbamoyladenosine(37) in tRNA + AMP + H(+). In terms of biological role, component of the EKC/KEOPS complex that is required for the formation of a threonylcarbamoyl group on adenosine at position 37 (t(6)A37) in tRNAs that read codons beginning with adenine. The complex is probably involved in the transfer of the threonylcarbamoyl moiety of threonylcarbamoyl-AMP (TC-AMP) to the N6 group of A37. OSGEP likely plays a direct catalytic role in this reaction, but requires other protein(s) of the complex to fulfill this activity. The protein is tRNA N6-adenosine threonylcarbamoyltransferase (Osgep) of Rattus norvegicus (Rat).